Reading from the N-terminus, the 232-residue chain is Small ribosomal subunit protein uS3 (232 aa).

One can recognise a KH type-2 domain in the interval 39–107 (IREILHKELK…DVVINIVEIR (69 aa)).

It belongs to the universal ribosomal protein uS3 family. Part of the 30S ribosomal subunit. Forms a tight complex with proteins S10 and S14.

Functionally, binds the lower part of the 30S subunit head. Binds mRNA in the 70S ribosome, positioning it for translation. This Rhodopseudomonas palustris (strain BisB18) protein is Small ribosomal subunit protein uS3.